A 339-amino-acid chain; its full sequence is DNA-directed RNA polymerase subunit alpha (339 aa).

The alpha N-terminal domain (alpha-NTD) stretch occupies residues 1–233; sequence MVREEVAGST…DLFLPFLHAE (233 aa). The segment at 266-339 is alpha C-terminal domain (alpha-CTD); that stretch reads GIPLNCIFID…MDLLKNKLSF (74 aa).

This sequence belongs to the RNA polymerase alpha chain family. As to quaternary structure, in plastids the minimal PEP RNA polymerase catalytic core is composed of four subunits: alpha, beta, beta', and beta''. When a (nuclear-encoded) sigma factor is associated with the core the holoenzyme is formed, which can initiate transcription.

Its subcellular location is the plastid. The protein resides in the chloroplast. The catalysed reaction is RNA(n) + a ribonucleoside 5'-triphosphate = RNA(n+1) + diphosphate. In terms of biological role, DNA-dependent RNA polymerase catalyzes the transcription of DNA into RNA using the four ribonucleoside triphosphates as substrates. The sequence is that of DNA-directed RNA polymerase subunit alpha from Agrostis stolonifera (Creeping bentgrass).